A 554-amino-acid polypeptide reads, in one-letter code: Intraflagellar transport protein 56 (554 aa).

The segment at 1–27 is disordered; sequence MMLSRAKPAVGGESPHTDKRKKKGRKI. Over residues 18–27 the composition is skewed to basic residues; it reads DKRKKKGRKI. TPR repeat units follow at residues 57–90, 92–125, 151–184, and 468–501; these read DDTNLWIGYCAFHLGDYKRALEEYENATKEENCN, EVWVNLACTYFFLGMYKQAEAAGFKAPKSRLQNR, KEDQLSLASIHYMRSHYQEAIDIYKRILLDNREY, and ANDCYKMGQFYYSAKAFDVLERLDPNPEYWEGKR.

It belongs to the IFT56 family. In terms of assembly, component of the IFT complex B. Interacts with IFT46; the interaction is direct. As to expression, high expression detected in testis. Detected also retina, kidney, lung and brain tissue. The expression level is low in spleen. Expressed in the developing liver. Present in the airway epithelial cells and the testes (at protein level).

The protein resides in the cell projection. The protein localises to the cilium. Component of the intraflagellar transport (IFT) complex B required for transport of proteins in the motile cilium. Required for transport of specific ciliary cargo proteins related to motility, while it is neither required for IFT complex B assembly or motion nor for cilium assembly. Required for efficient coupling between the accumulation of GLI2 and GLI3 at the ciliary tips and their dissociation from the negative regulator SUFU. Plays a key role in maintaining the integrity of the IFT complex B and the proper ciliary localization of the IFT complex B components. Not required for IFT complex A ciliary localization or function. Essential for maintaining proper microtubule organization within the ciliary axoneme. The sequence is that of Intraflagellar transport protein 56 from Mus musculus (Mouse).